The following is a 152-amino-acid chain: Protein SprT-like (152 aa).

A SprT-like domain is found at 9 to 149; sequence LQKLTETISL…CGKCNGKLKE (141 aa). Position 70 (H70) interacts with Zn(2+). E71 is an active-site residue. H74 is a Zn(2+) binding site.

Belongs to the SprT family. It depends on Zn(2+) as a cofactor.

The protein localises to the cytoplasm. The polypeptide is Protein SprT-like (Staphylococcus saprophyticus subsp. saprophyticus (strain ATCC 15305 / DSM 20229 / NCIMB 8711 / NCTC 7292 / S-41)).